The primary structure comprises 584 residues: Chondroitin proteoglycan 1 (584 aa).

The N-terminal stretch at Met1–Ala17 is a signal peptide. Ser50 is a glycosylation site (O-linked (Xyl...) (chondroitin sulfate) serine). Chitin-binding type-2 domains follow at residues Asp58 to Gly115, Thr211 to Asn268, and Val524 to Gln578. Disulfide bonds link Cys91/Cys104 and Cys244/Cys257. A disordered region spans residues Thr267–Gly295. Asn268 is a glycosylation site (N-linked (GlcNAc...) asparagine). Cysteines 554 and 567 form a disulfide.

Expressed in the germline.

Functionally, required for polar body extrusion during cytokinesis in embryo development. Affects cortical granule size. Has roles in meiotic chromosome segregation, osmotic barrier function and polarization in conjunction with cpg-2. Binds chitin. This chain is Chondroitin proteoglycan 1 (cpg-1), found in Caenorhabditis elegans.